A 488-amino-acid chain; its full sequence is MNLAEICENAKKGREYALLGNYDSSMVYYQGVIQQIQRHCQSLRDPATKAKWQQVRQELLEEYEQVKSIVSTLESFKMDKPPDFPVSCRDEPFRDPAVWPPPVPAEHRAPPQIRRPNREVRPLRKDVGAGARGLVGRAHQISKSDKPASRDKDYRARGRDDKARKNVQDGASDSEIPKFDGAGYDKDLVEALERDIVSRNPSIHWDDIADLEEAKKLLREAVVLPMWMPDFFKGIRRPWKGVLMVGPPGTGKTMLAKAVATECGTTFFNVSSSTLTSKYRGESEKLVRLLFEMARFYAPTTIFIDEIDSICSRRGTSDEHEASRRVKSELLIQMDGVGGALENDDPSKMVMVLAATNFPWDIDEALRRRLEKRIYIPLPTAKGRAELLKISLREVELDPDVHLEDIADKTEGYSGADITNICRDASLMAMRRRINGLSPEEIRALSKEELQMPVTRGDLELALKKIAKSVSAADLEKYEKWMVEFGSA.

An N-acetylmethionine modification is found at Met-1. The disordered stretch occupies residues 95 to 179 (DPAVWPPPVP…GASDSEIPKF (85 aa)). The segment covering 116–127 (PNREVRPLRKDV) has biased composition (basic and acidic residues). Low complexity predominate over residues 128–138 (GAGARGLVGRA). Basic and acidic residues predominate over residues 142-167 (SKSDKPASRDKDYRARGRDDKARKNV). At Ser-172 the chain carries Phosphoserine. Position 246–253 (246–253 (GPPGTGKT)) interacts with ATP.

Belongs to the AAA ATPase family. Katanin p60 subunit A1 subfamily. A-like 1 sub-subfamily. In terms of assembly, interacts with KATNB1 and KATNBL1. In terms of tissue distribution, widely expressed, including in testis, brain, heart, lung, kidney, liver, spleen, seminal vesicles and ovary. In testis, restricted to Sertoli cells within the seminiferous epithelium (at protein level).

It is found in the cytoplasm. It localises to the cytoskeleton. The protein resides in the spindle pole. The protein localises to the spindle. The catalysed reaction is n ATP + n H2O + a microtubule = n ADP + n phosphate + (n+1) alpha/beta tubulin heterodimers.. Regulates microtubule dynamics in Sertoli cells, a process that is essential for spermiogenesis and male fertility. Severs microtubules in an ATP-dependent manner, promoting rapid reorganization of cellular microtubule arrays. Has microtubule-severing activity in vitro. The protein is Katanin p60 ATPase-containing subunit A-like 1 (Katnal1) of Mus musculus (Mouse).